Here is a 322-residue protein sequence, read N- to C-terminus: MAAAPVLEFERPIADLEKQIEELKRLAADRSLDVAEELAPLQKKLGDLRIQIYQNLSPLQRVQVARMSRRPFTSDYIKHAFSDFIELHGDRLFREDAAIMAGWARLEGETVMLIGHERGRDTKENLKRNFGMPHPEGYRKALRLMKLAEKFQVPVLTFIDTPGAWPGLGAEERGQSEAIARNLLEMSQLQVPIIATIIGEGGSGGALALGVADRVLMFENSVYSTISVEGCAAILWKDGKSQEMREKAATALRVTAADLVELRVIDEVIQEPVGGAHADHAATARALRETLTRNLEELRRLKPDKLVRRRREKFLRMGQFTE.

In terms of domain architecture, CoA carboxyltransferase C-terminal spans 40–297 (PLQKKLGDLR…RETLTRNLEE (258 aa)).

This sequence belongs to the AccA family. In terms of assembly, acetyl-CoA carboxylase is a heterohexamer composed of biotin carboxyl carrier protein (AccB), biotin carboxylase (AccC) and two subunits each of ACCase subunit alpha (AccA) and ACCase subunit beta (AccD).

It localises to the cytoplasm. The catalysed reaction is N(6)-carboxybiotinyl-L-lysyl-[protein] + acetyl-CoA = N(6)-biotinyl-L-lysyl-[protein] + malonyl-CoA. Its pathway is lipid metabolism; malonyl-CoA biosynthesis; malonyl-CoA from acetyl-CoA: step 1/1. Component of the acetyl coenzyme A carboxylase (ACC) complex. First, biotin carboxylase catalyzes the carboxylation of biotin on its carrier protein (BCCP) and then the CO(2) group is transferred by the carboxyltransferase to acetyl-CoA to form malonyl-CoA. This is Acetyl-coenzyme A carboxylase carboxyl transferase subunit alpha from Gemmatimonas aurantiaca (strain DSM 14586 / JCM 11422 / NBRC 100505 / T-27).